The primary structure comprises 256 residues: DNA repair protein RecO (256 aa).

The protein belongs to the RecO family.

In terms of biological role, involved in DNA repair and RecF pathway recombination. In Pelotomaculum thermopropionicum (strain DSM 13744 / JCM 10971 / SI), this protein is DNA repair protein RecO.